We begin with the raw amino-acid sequence, 269 residues long: UPF0761 membrane protein HI_0276 (269 aa).

Helical transmembrane passes span 32-52 (MLAM…FPVF), 89-109 (MSAV…NNID), 128-148 (FAIY…SIGI), 168-188 (LLSF…YTVV), 203-223 (FLAA…IVTF), and 232-252 (AMAT…VVLV).

This sequence belongs to the UPF0761 family.

It localises to the cell inner membrane. The chain is UPF0761 membrane protein HI_0276 from Haemophilus influenzae (strain ATCC 51907 / DSM 11121 / KW20 / Rd).